An 865-amino-acid chain; its full sequence is cGMP-specific 3',5'-cyclic phosphodiesterase (865 aa).

The span at 69–83 (CSCSSQQSSRADSSA) shows a compositional bias: low complexity. A disordered region spans residues 69-92 (CSCSSQQSSRADSSAPGTPTRKIS). Ser-92 is subject to Phosphoserine. GAF domains follow at residues 154–304 (DVTA…GIVL) and 336–493 (SLEV…GLGI). Residues 526 to 850 (ETKELQSLAA…QKWQALAEQQ (325 aa)) form the PDEase domain. His-603 serves as the catalytic Proton donor. Residues His-607, His-643, Asp-644, and Asp-754 each contribute to the Zn(2+) site. Position 644 (Asp-644) interacts with Mg(2+). A 3',5'-cyclic GMP-binding site is contributed by Gln-807.

It belongs to the cyclic nucleotide phosphodiesterase family. Zn(2+) serves as cofactor. The cofactor is Mg(2+). In terms of processing, phosphorylation is regulated by binding of cGMP to the two allosteric sites. Phosphorylation by PRKG1 leads to its activation. In terms of tissue distribution, isoform PDE5A1 and isoform PDE5A2 are highly expressed in the cerebellum, hippocampus, retina, lung, heart, spleen, and thoracic artery. Isoform PDE5A1, but not isoform PDE5A2, is also abundantly expressed in the pylorus.

It localises to the cytoplasm. The protein localises to the cytosol. The enzyme catalyses 3',5'-cyclic GMP + H2O = GMP + H(+). It participates in purine metabolism; 3',5'-cyclic GMP degradation; GMP from 3',5'-cyclic GMP: step 1/1. Inhibited by zaprinast. Its function is as follows. Plays a role in signal transduction by regulating the intracellular concentration of cyclic nucleotides. This phosphodiesterase catalyzes the specific hydrolysis of cGMP to 5'-GMP. Specifically regulates nitric-oxide-generated cGMP. The sequence is that of cGMP-specific 3',5'-cyclic phosphodiesterase (PDE5A) from Canis lupus familiaris (Dog).